Reading from the N-terminus, the 256-residue chain is tRNA (guanine-N(7)-)-methyltransferase (256 aa).

Glu-85, Glu-110, Asp-137, and Asp-159 together coordinate S-adenosyl-L-methionine. The active site involves Asp-159. Lys-163 and Asp-195 together coordinate substrate.

It belongs to the class I-like SAM-binding methyltransferase superfamily. TrmB family.

The enzyme catalyses guanosine(46) in tRNA + S-adenosyl-L-methionine = N(7)-methylguanosine(46) in tRNA + S-adenosyl-L-homocysteine. Its pathway is tRNA modification; N(7)-methylguanine-tRNA biosynthesis. In terms of biological role, catalyzes the formation of N(7)-methylguanine at position 46 (m7G46) in tRNA. The sequence is that of tRNA (guanine-N(7)-)-methyltransferase from Rhodopseudomonas palustris (strain BisB5).